Here is a 360-residue protein sequence, read N- to C-terminus: Aminomethyltransferase (360 aa).

The protein belongs to the GcvT family. As to quaternary structure, the glycine cleavage system is composed of four proteins: P, T, L and H.

It carries out the reaction N(6)-[(R)-S(8)-aminomethyldihydrolipoyl]-L-lysyl-[protein] + (6S)-5,6,7,8-tetrahydrofolate = N(6)-[(R)-dihydrolipoyl]-L-lysyl-[protein] + (6R)-5,10-methylene-5,6,7,8-tetrahydrofolate + NH4(+). Functionally, the glycine cleavage system catalyzes the degradation of glycine. The protein is Aminomethyltransferase of Pseudomonas syringae pv. tomato (strain ATCC BAA-871 / DC3000).